The sequence spans 330 residues: Tryptophan--tRNA ligase (330 aa).

ATP is bound by residues 6-8 and 14-15; these read QPT and GN. Positions 7–15 match the 'HIGH' region motif; the sequence is PTGSLHLGN. Residue aspartate 130 coordinates L-tryptophan. ATP contacts are provided by residues 142 to 144, valine 185, and 194 to 198; these read GED and KMSKS. The short motif at 194–198 is the 'KMSKS' region element; sequence KMSKS.

Belongs to the class-I aminoacyl-tRNA synthetase family. In terms of assembly, homodimer.

Its subcellular location is the cytoplasm. It catalyses the reaction tRNA(Trp) + L-tryptophan + ATP = L-tryptophyl-tRNA(Trp) + AMP + diphosphate + H(+). Functionally, catalyzes the attachment of tryptophan to tRNA(Trp). The polypeptide is Tryptophan--tRNA ligase (Thermosynechococcus vestitus (strain NIES-2133 / IAM M-273 / BP-1)).